The sequence spans 491 residues: Xaa-Pro aminopeptidase 1 (491 aa).

Residues 1-32 (MAEELTPENPAIPETPEETEEPIKQRKNGLYP) form a disordered region. 5 residues coordinate Mn(2+): aspartate 308, aspartate 320, histidine 403, glutamate 434, and glutamate 458.

It belongs to the peptidase M24B family. In terms of assembly, homodimer. It depends on Mn(2+) as a cofactor.

The catalysed reaction is Release of any N-terminal amino acid, including proline, that is linked to proline, even from a dipeptide or tripeptide.. The protein is Xaa-Pro aminopeptidase 1 (pepPI) of Streptomyces coelicolor (strain ATCC BAA-471 / A3(2) / M145).